Consider the following 144-residue polypeptide: HTH-type transcriptional regulator LrpC (144 aa).

The HTH asnC-type domain occupies 3–64 (LDQIDLNIIE…EVDQKKLGLP (62 aa)). The H-T-H motif DNA-binding region spans 22–41 (MRELGRKIKLSPPSVTERVR).

In terms of biological role, transcriptional regulator with a possible role in regulation of amino acid metabolism. Plays a role in the growth phase transition. The polypeptide is HTH-type transcriptional regulator LrpC (lrpC) (Bacillus subtilis (strain 168)).